A 262-amino-acid chain; its full sequence is Phosphatidylglycerol--prolipoprotein diacylglyceryl transferase (262 aa).

4 helical membrane passes run 9-29 (LGPL…ILAV), 41-61 (IIPD…ILGA), 80-100 (IFAI…GALV), and 109-129 (LINT…AQSL). Residue arginine 131 coordinates a 1,2-diacyl-sn-glycero-3-phospho-(1'-sn-glycerol). Helical transmembrane passes span 167-187 (QPTF…ILIF), 197-217 (GHIT…IEGM), and 227-247 (LRVS…IVIY).

It belongs to the Lgt family.

It is found in the cell membrane. It carries out the reaction L-cysteinyl-[prolipoprotein] + a 1,2-diacyl-sn-glycero-3-phospho-(1'-sn-glycerol) = an S-1,2-diacyl-sn-glyceryl-L-cysteinyl-[prolipoprotein] + sn-glycerol 1-phosphate + H(+). Its pathway is protein modification; lipoprotein biosynthesis (diacylglyceryl transfer). Functionally, catalyzes the transfer of the diacylglyceryl group from phosphatidylglycerol to the sulfhydryl group of the N-terminal cysteine of a prolipoprotein, the first step in the formation of mature lipoproteins. This is Phosphatidylglycerol--prolipoprotein diacylglyceryl transferase from Streptococcus pneumoniae (strain JJA).